The following is a 1036-amino-acid chain: Integrin alpha-9 (1036 aa).

The first 28 residues, 1-28 (MGGPAAARTGAGGLRALLLALVAAGVPA), serve as a signal peptide directing secretion. Topologically, residues 29–981 (GAYNLDAQRP…NLEPRGYVVG (953 aa)) are extracellular. FG-GAP repeat units follow at residues 36–97 (QRPV…PDRR), 109–175 (RGAP…AKGK), 183–233 (EYKK…NTYF), 234–290 (KLND…SGTL), 291–350 (IKIF…GALE), 352–409 (QLTL…GIVP), and 412–475 (SMKL…LPGS). Disulfide bonds link C88–C98, C143–C163, and C180–C195. N226 is a glycosylation site (N-linked (GlcNAc...) asparagine). D313, N315, D317, D321, D374, D376, D378, D382, D436, D438, N440, and D444 together coordinate Ca(2+). A disulfide bond links C483 and C492. N-linked (GlcNAc...) asparagine glycosylation is found at N494 and N515. Intrachain disulfides connect C498–C556, C621–C626, and C697–C707. N808 carries an N-linked (GlcNAc...) asparagine glycan. 2 disulfides stabilise this stretch: C856–C892 and C899–C904. A helical membrane pass occupies residues 982–1002 (WIIAISLLVGILIFLLLAVLL). The Cytoplasmic portion of the chain corresponds to 1003-1036 (WKMGFFRRRYKEIIEAEKNRKENEDGWDWVQKNQ). A GFFKR motif motif is present at residues 1006–1010 (GFFRR).

It belongs to the integrin alpha chain family. In terms of assembly, heterodimer of an alpha and a beta subunit. Alpha-9 (ITGA9) associates with beta-1 (ITGB1). Integrin ITGA9:ITGB1 interacts with FBLN5 (via N-terminus). Integrin ITGA9:ITGB1 interacts with SPP1/OPN (via N-terminus). Integrin ITGA9:ITGB1 interacts with TNC/TNFN3 (via the 3rd Fibronectin type-III domain). Integrin ITGA9:ITGB1 interacts with SVEP1/polydom (via Sushi domain 21); thereby inhibits Ca(2+) intracellular signaling and as a result represses vasocontraction. As to expression, expressed in the media layer of the arterial wall (at protein level). Expressed in the airway epithelium, skeletal muscle, basal keratincytes, the basal epithelium of the cornea, hepatocytes, giant cells in the spleen and smooth muscle of the stomach, duodenum and veins (at protein level).

It is found in the membrane. Its function is as follows. Integrin alpha-9/beta-1 (ITGA9:ITGB1) is a receptor for VCAM1, cytotactin and osteopontin. It recognizes the sequence A-E-I-D-G-I-E-L in cytotactin. ITGA9:ITGB1 may play a crucial role in SVEP1/polydom-mediated myoblast cell adhesion. Integrin ITGA9:ITGB1 represses PRKCA-mediated L-type voltage-gated channel Ca(2+) influx and ROCK-mediated calcium sensitivity in vascular smooth muscle cells via its interaction with SVEP1, thereby inhibiting vasocontraction. In Mus musculus (Mouse), this protein is Integrin alpha-9.